The chain runs to 439 residues: GTPase Der (439 aa).

2 consecutive EngA-type G domains span residues 2–168 (ATVL…EEKG) and 181–357 (IKVA…ASYT). GTP-binding positions include 8–15 (GKPNVGKS), 55–59 (DTCGV), 118–121 (NKTE), 187–194 (GRPNVGKS), 234–238 (DTAGL), and 300–303 (NKWD). The region spanning 358 to 439 (TKVPSSAINS…PIFLKFKRSR (82 aa)) is the KH-like domain.

It belongs to the TRAFAC class TrmE-Era-EngA-EngB-Septin-like GTPase superfamily. EngA (Der) GTPase family. As to quaternary structure, associates with the 50S ribosomal subunit.

Its function is as follows. GTPase that plays an essential role in the late steps of ribosome biogenesis. The protein is GTPase Der of Thermotoga petrophila (strain ATCC BAA-488 / DSM 13995 / JCM 10881 / RKU-1).